Here is a 585-residue protein sequence, read N- to C-terminus: Mitochondrial sodium/calcium exchanger protein (585 aa).

Residues 1 to 26 (MASRWLALLWAPVFLCVALILETASG) form the signal peptide. The Extracellular portion of the chain corresponds to 27 to 95 (TGDPSTKAHG…GIFCYFPPNL (69 aa)). Asn-46 is a glycosylation site (N-linked (GlcNAc...) asparagine). Residues 96–116 (LPLAITLYVFWLLYLFLILGV) form a helical membrane-spanning segment. The Cytoplasmic segment spans residues 117-140 (TAAKFFCPNLSAISTNLKLSHNVA). A helical membrane pass occupies residues 141-161 (GVTFLAFGNGAPDIFSALVAF). The Extracellular segment spans residues 162–168 (SDPRTAG). A helical membrane pass occupies residues 169-189 (LAIGALFGAGVLVTTVVAGGI). Over 190-205 (TILHPFMAASRPFLRD) the chain is Cytoplasmic. The helical transmembrane segment at 206 to 226 (IAFYMVAVFLTFTALYLGRIT) threads the bilayer. Residues 227 to 229 (LTW) lie on the Extracellular side of the membrane. The chain crosses the membrane as a helical span at residues 230 to 250 (ALGYLGLYVFYVVTVIICTWV). Over 251–325 (YQRQRSRSLV…KWRTQSISWR (75 aa)) the chain is Cytoplasmic. Ser-258 is modified (phosphoserine; by PKA). Residues 326–346 (VLKVVKLPVEFLLLLTVPVVD) traverse the membrane as a helical segment. Residues 347 to 360 (PDKDDRNWKRPLNC) lie on the Extracellular side of the membrane. A helical transmembrane segment spans residues 361–381 (LQLVISPLVLVLTLQSGVYGI). Over 382 to 383 (YE) the chain is Cytoplasmic. Residues 384–404 (IGGLLPVWAVVVIVGTALASV) form a helical membrane-spanning segment. The Extracellular segment spans residues 405 to 416 (TFFATSNREPPR). The helical transmembrane segment at 417–437 (LHWLFAFLGFLTSALWINAAA) threads the bilayer. Residues 438 to 445 (TEVVNILR) are Cytoplasmic-facing. Residues 446–466 (SLGVIFRLSNTVLGLTLLAWG) traverse the membrane as a helical segment. Over 467–491 (NSIGDAFSDFTLARQGYPRMAFSAC) the chain is Extracellular. A helical transmembrane segment spans residues 492 to 512 (FGGIIFNILVGVGLGCLLQII). Over 513 to 525 (RNHVVEVKLEPDG) the chain is Cytoplasmic. Residues 526-546 (LLVWVLASALGLSLIFSLVSV) form a helical membrane-spanning segment. The Extracellular portion of the chain corresponds to 547–559 (PLQCFQLSKAYGL). A helical transmembrane segment spans residues 560–580 (CLLLFYICFLVVVLLTEFGVI). Residues 581-585 (HLKKA) are Cytoplasmic-facing.

It belongs to the Ca(2+):cation antiporter (CaCA) (TC 2.A.19) family. SLC24A subfamily. Phosphorylation at Ser-258 by PKA prevents calcium overload. In terms of tissue distribution, ubiquitously expressed. Expressed in dental tissues.

Its subcellular location is the mitochondrion inner membrane. The protein resides in the cell membrane. It carries out the reaction Ca(2+)(in) + 3 Na(+)(out) = Ca(2+)(out) + 3 Na(+)(in). The catalysed reaction is 3 Li(+)(out) + Ca(2+)(in) = 3 Li(+)(in) + Ca(2+)(out). With respect to regulation, inhibited by the sodium/calcium exchanger inhibitor CGP-37157. Strongly inhibited by zinc. Its function is as follows. Mitochondrial sodium/calcium antiporter that mediates sodium-dependent calcium efflux from mitochondrion, by mediating the exchange of 3 sodium ions per 1 calcium ion. Plays a central role in mitochondrial calcium homeostasis by mediating mitochondrial calcium extrusion: calcium efflux is essential for mitochondrial function and cell survival, notably in cardiomyocytes. Regulates rates of glucose-dependent insulin secretion in pancreatic beta-cells during the first phase of insulin secretion: acts by mediating efflux of calcium from mitochondrion, thereby affecting cytoplasmic calcium responses. Required for store-operated Ca(2+) entry (SOCE) and Ca(2+) release-activated Ca(2+) (CRAC) channel regulation: sodium transport by SLC8B1 leads to promote calcium-shuttling that modulates mitochondrial redox status, thereby regulating SOCE activity. Involved in B-lymphocyte chemotaxis. Able to transport Ca(2+) in exchange of either Li(+) or Na(+), explaining how Li(+) catalyzes Ca(2+) exchange. In contrast to other members of the family its function is independent of K(+). The polypeptide is Mitochondrial sodium/calcium exchanger protein (Mus musculus (Mouse)).